Here is a 644-residue protein sequence, read N- to C-terminus: Fructose-1,6-bisphosphatase class 3 (644 aa).

It belongs to the FBPase class 3 family. Mn(2+) is required as a cofactor.

It carries out the reaction beta-D-fructose 1,6-bisphosphate + H2O = beta-D-fructose 6-phosphate + phosphate. Its pathway is carbohydrate biosynthesis; gluconeogenesis. In Oceanobacillus iheyensis (strain DSM 14371 / CIP 107618 / JCM 11309 / KCTC 3954 / HTE831), this protein is Fructose-1,6-bisphosphatase class 3.